Here is a 234-residue protein sequence, read N- to C-terminus: 1-(5-phosphoribosyl)-5-[(5-phosphoribosylamino)methylideneamino] imidazole-4-carboxamide isomerase (234 aa).

Catalysis depends on Asp9, which acts as the Proton acceptor. Asp131 serves as the catalytic Proton donor.

This sequence belongs to the HisA/HisF family.

The protein resides in the cytoplasm. The catalysed reaction is 1-(5-phospho-beta-D-ribosyl)-5-[(5-phospho-beta-D-ribosylamino)methylideneamino]imidazole-4-carboxamide = 5-[(5-phospho-1-deoxy-D-ribulos-1-ylimino)methylamino]-1-(5-phospho-beta-D-ribosyl)imidazole-4-carboxamide. It participates in amino-acid biosynthesis; L-histidine biosynthesis; L-histidine from 5-phospho-alpha-D-ribose 1-diphosphate: step 4/9. The polypeptide is 1-(5-phosphoribosyl)-5-[(5-phosphoribosylamino)methylideneamino] imidazole-4-carboxamide isomerase (Staphylococcus epidermidis (strain ATCC 12228 / FDA PCI 1200)).